The chain runs to 207 residues: LexA repressor (207 aa).

A DNA-binding region (H-T-H motif) is located at residues 28 to 48 (RAEISRELGFKSANAAEEHLK). Catalysis depends on for autocatalytic cleavage activity residues S123 and K160.

This sequence belongs to the peptidase S24 family. As to quaternary structure, homodimer.

It carries out the reaction Hydrolysis of Ala-|-Gly bond in repressor LexA.. Represses a number of genes involved in the response to DNA damage (SOS response), including recA and lexA. In the presence of single-stranded DNA, RecA interacts with LexA causing an autocatalytic cleavage which disrupts the DNA-binding part of LexA, leading to derepression of the SOS regulon and eventually DNA repair. This Haemophilus influenzae (strain 86-028NP) protein is LexA repressor.